Reading from the N-terminus, the 716-residue chain is Probable glutamate--tRNA ligase, cytoplasmic (716 aa).

A Phosphoserine modification is found at Ser190. 210-212 (RFP) is a binding site for L-glutamate. A 'HIGH' region motif is present at residues 215 to 224 (PSGYLHIGHA). Residue His220 participates in ATP binding. L-glutamate contacts are provided by residues Asp246, 386 to 390 (YDFAC), and Arg404. Residues Glu407 and 441–445 (LLSKR) each bind ATP. The short motif at 441-445 (LLSKR) is the 'KMSKS' region element.

It belongs to the class-I aminoacyl-tRNA synthetase family. Glutamate--tRNA ligase type 2 subfamily. In terms of assembly, component of a yeast aminoacyl-tRNA synthase (aaRS) complex formed by methionyl-tRNA synthase, glutamyl-tRNA synthase and the tRNA aminoacylation cofactor arc1 in a stoichiometric complex. Interacts with arc1/SPAC30C2.04.

It is found in the cytoplasm. The protein localises to the nucleus. It catalyses the reaction tRNA(Glu) + L-glutamate + ATP = L-glutamyl-tRNA(Glu) + AMP + diphosphate. Functionally, catalyzes the attachment of glutamate to tRNA(Glu) in a two-step reaction: glutamate is first activated by ATP to form Glu-AMP and then transferred to the acceptor end of tRNA(Glu). The protein is Probable glutamate--tRNA ligase, cytoplasmic (gus1) of Schizosaccharomyces pombe (strain 972 / ATCC 24843) (Fission yeast).